Consider the following 284-residue polypeptide: Malonyl-[acyl-carrier protein] O-methyltransferase (284 aa).

Belongs to the methyltransferase superfamily.

It carries out the reaction malonyl-[ACP] + S-adenosyl-L-methionine = malonyl-[ACP] methyl ester + S-adenosyl-L-homocysteine. It functions in the pathway cofactor biosynthesis; biotin biosynthesis. Functionally, converts the free carboxyl group of a malonyl-thioester to its methyl ester by transfer of a methyl group from S-adenosyl-L-methionine (SAM). It allows to synthesize pimeloyl-ACP via the fatty acid synthetic pathway. The chain is Malonyl-[acyl-carrier protein] O-methyltransferase from Legionella pneumophila subsp. pneumophila (strain Philadelphia 1 / ATCC 33152 / DSM 7513).